A 972-amino-acid polypeptide reads, in one-letter code: Translation initiation factor IF-2 (972 aa).

Residues 49–63 show a composition bias toward basic and acidic residues; the sequence is HLRKSHGATDGDKRK. Disordered stretches follow at residues 49 to 86 and 100 to 383; these read HLRKSHGATDGDKRKITLTRKHTSEIKQSDATGKARTI and DDVA…TFQA. Low complexity predominate over residues 105-114; the sequence is GAEQGQAQVA. Over residues 121–177 the composition is skewed to basic and acidic residues; the sequence is ELKRREEEARREAELLEKQAQELRERQERLEREEAERRAREEAAEAERRRAEEEAAA. Residues 178 to 209 show a composition bias toward low complexity; sequence KRAAAAAVEAQQAAAQQAAEAQQETAGAQSAQ. Residues 210–261 show a composition bias toward basic and acidic residues; that stretch reads DEARAAAERAAQREAAKKAEDAAREAADKTRAEQEEIRKRREAAEAEARAIR. The segment covering 277–286 has biased composition (pro residues); it reads PPKPVEPPKP. A compositionally biased stretch (low complexity) spans 298–327; the sequence is KPAGAGAARPAVKKPAGAAPATTQAPAGAG. Positions 356 to 369 are enriched in gly residues; the sequence is SSGGVDRGWRGGPK. One can recognise a tr-type G domain in the interval 472 to 641; that stretch reads PRPPVVTVMG…LLQAEVLELK (170 aa). The interval 481-488 is G1; the sequence is GHVDHGKT. 481 to 488 contributes to the GTP binding site; that stretch reads GHVDHGKT. A G2 region spans residues 506 to 510; sequence GITQH. Residues 527–530 are G3; it reads DTPG. GTP contacts are provided by residues 527-531 and 581-584; these read DTPGH and NKID. Positions 581 to 584 are G4; it reads NKID. The segment at 617–619 is G5; sequence SAK.

The protein belongs to the TRAFAC class translation factor GTPase superfamily. Classic translation factor GTPase family. IF-2 subfamily.

It localises to the cytoplasm. In terms of biological role, one of the essential components for the initiation of protein synthesis. Protects formylmethionyl-tRNA from spontaneous hydrolysis and promotes its binding to the 30S ribosomal subunits. Also involved in the hydrolysis of GTP during the formation of the 70S ribosomal complex. The sequence is that of Translation initiation factor IF-2 from Burkholderia ambifaria (strain MC40-6).